Reading from the N-terminus, the 388-residue chain is Protein-glutamate methylesterase/protein-glutamine glutaminase 4 (388 aa).

The 118-residue stretch at 4–121 (KVLVVDDSGF…SGDASKIKRL (118 aa)) folds into the Response regulatory domain. Asp-55 bears the 4-aspartylphosphate mark. The disordered stretch occupies residues 137 to 196 (SGASAPASVPQPAKPAAPIPVREPPKPAAPVTRPAEPRAKAPPAKPEPKPEVKAAKSRRT). Over residues 148 to 164 (PAKPAAPIPVREPPKPA) the composition is skewed to pro residues. A CheB-type methylesterase domain is found at 197–388 (PRQDYKVVLI…FAPRLIDGVG (192 aa)). Catalysis depends on residues Ser-209, His-236, and Asp-332.

The protein belongs to the CheB family. Phosphorylated by CheA. Phosphorylation of the N-terminal regulatory domain activates the methylesterase activity.

It is found in the cytoplasm. It catalyses the reaction [protein]-L-glutamate 5-O-methyl ester + H2O = L-glutamyl-[protein] + methanol + H(+). The catalysed reaction is L-glutaminyl-[protein] + H2O = L-glutamyl-[protein] + NH4(+). In terms of biological role, involved in chemotaxis. Part of a chemotaxis signal transduction system that modulates chemotaxis in response to various stimuli. Catalyzes the demethylation of specific methylglutamate residues introduced into the chemoreceptors (methyl-accepting chemotaxis proteins or MCP) by CheR. Also mediates the irreversible deamidation of specific glutamine residues to glutamic acid. The chain is Protein-glutamate methylesterase/protein-glutamine glutaminase 4 from Hahella chejuensis (strain KCTC 2396).